A 298-amino-acid chain; its full sequence is Small ribosomal subunit protein uS3 (298 aa).

Positions 38 to 106 (IRRRLSRGME…QVQLNILEVK (69 aa)) constitute a KH type-2 domain. The tract at residues 212–298 (KQKQQESEVR…EPRADEKTEG (87 aa)) is disordered. Positions 214–237 (KQQESEVRPPRGERGERGGRPERG) are enriched in basic and acidic residues. A compositionally biased stretch (polar residues) spans 265 to 278 (GSAQSPEQAQTSGD).

The protein belongs to the universal ribosomal protein uS3 family. Part of the 30S ribosomal subunit. Forms a tight complex with proteins S10 and S14.

Its function is as follows. Binds the lower part of the 30S subunit head. Binds mRNA in the 70S ribosome, positioning it for translation. In Saccharopolyspora erythraea (strain ATCC 11635 / DSM 40517 / JCM 4748 / NBRC 13426 / NCIMB 8594 / NRRL 2338), this protein is Small ribosomal subunit protein uS3.